We begin with the raw amino-acid sequence, 218 residues long: MSIAVLRFPGTNCEFDMLHSFKLLGVESHLVWHQEKELPKGTHLVVIPGGFSYGDYLRSGAIARFSPIMQAVIRYAKEGGKVLGICNGFQILVESGLLPGALRRNENLHFVSKFQKLAVVSNNNPFLREYAVSETLNIPIAHADGNYFIDAKGLEELKENDQILLTYQGENPNGSIESIAGVCNKEKSVFGLMPHPERAMEPLLGSVDGARMLRGLAC.

The Glutamine amidotransferase type-1 domain occupies 2–218 (SIAVLRFPGT…GARMLRGLAC (217 aa)). The active-site Nucleophile is C86. Active-site residues include H195 and E197.

In terms of assembly, part of the FGAM synthase complex composed of 1 PurL, 1 PurQ and 2 PurS subunits.

Its subcellular location is the cytoplasm. The catalysed reaction is N(2)-formyl-N(1)-(5-phospho-beta-D-ribosyl)glycinamide + L-glutamine + ATP + H2O = 2-formamido-N(1)-(5-O-phospho-beta-D-ribosyl)acetamidine + L-glutamate + ADP + phosphate + H(+). It catalyses the reaction L-glutamine + H2O = L-glutamate + NH4(+). It participates in purine metabolism; IMP biosynthesis via de novo pathway; 5-amino-1-(5-phospho-D-ribosyl)imidazole from N(2)-formyl-N(1)-(5-phospho-D-ribosyl)glycinamide: step 1/2. Part of the phosphoribosylformylglycinamidine synthase complex involved in the purines biosynthetic pathway. Catalyzes the ATP-dependent conversion of formylglycinamide ribonucleotide (FGAR) and glutamine to yield formylglycinamidine ribonucleotide (FGAM) and glutamate. The FGAM synthase complex is composed of three subunits. PurQ produces an ammonia molecule by converting glutamine to glutamate. PurL transfers the ammonia molecule to FGAR to form FGAM in an ATP-dependent manner. PurS interacts with PurQ and PurL and is thought to assist in the transfer of the ammonia molecule from PurQ to PurL. This chain is Phosphoribosylformylglycinamidine synthase subunit PurQ, found in Wolinella succinogenes (strain ATCC 29543 / DSM 1740 / CCUG 13145 / JCM 31913 / LMG 7466 / NCTC 11488 / FDC 602W) (Vibrio succinogenes).